A 780-amino-acid chain; its full sequence is Protein SAV (780 aa).

Residues glycine 253–threonine 260 and glycine 528–threonine 535 each bind ATP.

This sequence belongs to the AAA ATPase family. CDC48 subfamily.

Functionally, not yet known, shows ATPase activity. This chain is Protein SAV (sav), found in Sulfolobus acidocaldarius (strain ATCC 33909 / DSM 639 / JCM 8929 / NBRC 15157 / NCIMB 11770).